A 125-amino-acid chain; its full sequence is Desulfoferrodoxin homolog (125 aa).

Fe cation is bound by residues Cys-10, Cys-13, Cys-29, Cys-30, His-49, His-69, His-75, Cys-116, and His-119.

It belongs to the desulfoferrodoxin family. Fe(3+) serves as cofactor. It depends on Cu(2+) as a cofactor.

The protein is Desulfoferrodoxin homolog of Archaeoglobus fulgidus (strain ATCC 49558 / DSM 4304 / JCM 9628 / NBRC 100126 / VC-16).